The chain runs to 500 residues: NAD(P)H-quinone oxidoreductase subunit 2 B, chloroplastic (500 aa).

A run of 13 helical transmembrane segments spans residues S14 to T34, W41 to L61, F78 to M98, L116 to I136, L166 to L186, I211 to F231, A242 to A262, W277 to I297, M305 to D325, Y335 to L355, A376 to F396, G409 to L429, and I467 to I487.

The protein belongs to the complex I subunit 2 family. NDH is composed of at least 16 different subunits, 5 of which are encoded in the nucleus.

Its subcellular location is the plastid. It localises to the chloroplast thylakoid membrane. The catalysed reaction is a plastoquinone + NADH + (n+1) H(+)(in) = a plastoquinol + NAD(+) + n H(+)(out). It catalyses the reaction a plastoquinone + NADPH + (n+1) H(+)(in) = a plastoquinol + NADP(+) + n H(+)(out). Its function is as follows. NDH shuttles electrons from NAD(P)H:plastoquinone, via FMN and iron-sulfur (Fe-S) centers, to quinones in the photosynthetic chain and possibly in a chloroplast respiratory chain. The immediate electron acceptor for the enzyme in this species is believed to be plastoquinone. Couples the redox reaction to proton translocation, and thus conserves the redox energy in a proton gradient. In Anthoceros angustus (Hornwort), this protein is NAD(P)H-quinone oxidoreductase subunit 2 B, chloroplastic.